Reading from the N-terminus, the 124-residue chain is Small ribosomal subunit protein bS6 (124 aa).

The interval 93–124 (KKAETGPSSMMKTVEREEARKAQQAEYAANNS) is disordered. Over residues 105-115 (TVEREEARKAQ) the composition is skewed to basic and acidic residues.

The protein belongs to the bacterial ribosomal protein bS6 family.

Its function is as follows. Binds together with bS18 to 16S ribosomal RNA. This Variovorax paradoxus (strain S110) protein is Small ribosomal subunit protein bS6.